Consider the following 348-residue polypeptide: Heptaprenyl diphosphate synthase component 2 (348 aa).

3 residues coordinate isopentenyl diphosphate: Lys73, Arg76, and His105. Mg(2+)-binding residues include Asp112 and Asp116. Arg121 is an all-trans-hexaprenyl diphosphate binding site. Arg122 serves as a coordination point for isopentenyl diphosphate. All-trans-hexaprenyl diphosphate-binding residues include Lys198, Thr199, and Gln236.

Belongs to the FPP/GGPP synthase family. In terms of assembly, heterodimer of component I and II. It depends on Mg(2+) as a cofactor.

The catalysed reaction is 4 isopentenyl diphosphate + (2E,6E)-farnesyl diphosphate = all-trans-heptaprenyl diphosphate + 4 diphosphate. In terms of biological role, supplies heptaprenyl diphosphate, the precursor for the side chain of the isoprenoid quinone menaquinone-7 (MQ-7). This is Heptaprenyl diphosphate synthase component 2 (hepT) from Bacillus subtilis (strain 168).